The primary structure comprises 347 residues: UDP-N-acetylenolpyruvoylglucosamine reductase (347 aa).

The FAD-binding PCMH-type domain occupies 16 to 187 (AIEQCSHYLV…IAVGLKLPKT (172 aa)). R163 is an active-site residue. Residue S233 is the Proton donor of the active site. E328 is an active-site residue.

Belongs to the MurB family. The cofactor is FAD.

The protein resides in the cytoplasm. It carries out the reaction UDP-N-acetyl-alpha-D-muramate + NADP(+) = UDP-N-acetyl-3-O-(1-carboxyvinyl)-alpha-D-glucosamine + NADPH + H(+). It participates in cell wall biogenesis; peptidoglycan biosynthesis. In terms of biological role, cell wall formation. The sequence is that of UDP-N-acetylenolpyruvoylglucosamine reductase from Vibrio vulnificus (strain YJ016).